The primary structure comprises 267 residues: 4-hydroxy-tetrahydrodipicolinate reductase (267 aa).

NAD(+) is bound by residues glycine 8–methionine 13 and aspartate 34. Arginine 35 contacts NADP(+). Residues glycine 98–threonine 100 and alanine 122–phenylalanine 125 each bind NAD(+). Catalysis depends on histidine 155, which acts as the Proton donor/acceptor. Histidine 156 lines the (S)-2,3,4,5-tetrahydrodipicolinate pocket. Catalysis depends on lysine 159, which acts as the Proton donor. Glycine 165–threonine 166 lines the (S)-2,3,4,5-tetrahydrodipicolinate pocket.

The protein belongs to the DapB family.

The protein localises to the cytoplasm. It carries out the reaction (S)-2,3,4,5-tetrahydrodipicolinate + NAD(+) + H2O = (2S,4S)-4-hydroxy-2,3,4,5-tetrahydrodipicolinate + NADH + H(+). It catalyses the reaction (S)-2,3,4,5-tetrahydrodipicolinate + NADP(+) + H2O = (2S,4S)-4-hydroxy-2,3,4,5-tetrahydrodipicolinate + NADPH + H(+). Its pathway is amino-acid biosynthesis; L-lysine biosynthesis via DAP pathway; (S)-tetrahydrodipicolinate from L-aspartate: step 4/4. Catalyzes the conversion of 4-hydroxy-tetrahydrodipicolinate (HTPA) to tetrahydrodipicolinate. The chain is 4-hydroxy-tetrahydrodipicolinate reductase from Pseudomonas entomophila (strain L48).